The following is a 435-amino-acid chain: C4-dicarboxylate transport protein (435 aa).

9 helical membrane-spanning segments follow: residues 4 to 24 (SLFK…ILLG), 44 to 64 (LIKM…IAGM), 76 to 96 (VALL…LIIV), 142 to 162 (IGAF…LFGF), 184 to 204 (VIFG…FGAM), 222 to 242 (LIIC…GTIA), 289 to 309 (VVGL…SIYL), 326 to 346 (IFHQ…VAGV), and 352 to 372 (IVLA…LALI).

The protein belongs to the dicarboxylate/amino acid:cation symporter (DAACS) (TC 2.A.23) family.

It localises to the cell inner membrane. Responsible for the transport of dicarboxylates such as succinate, fumarate, and malate from the periplasm across the membrane. This Salmonella paratyphi A (strain ATCC 9150 / SARB42) protein is C4-dicarboxylate transport protein.